A 272-amino-acid chain; its full sequence is GTP cyclohydrolase FolE2 (272 aa).

The protein belongs to the GTP cyclohydrolase IV family.

It carries out the reaction GTP + H2O = 7,8-dihydroneopterin 3'-triphosphate + formate + H(+). It functions in the pathway cofactor biosynthesis; 7,8-dihydroneopterin triphosphate biosynthesis; 7,8-dihydroneopterin triphosphate from GTP: step 1/1. Its function is as follows. Converts GTP to 7,8-dihydroneopterin triphosphate. The polypeptide is GTP cyclohydrolase FolE2 (Aromatoleum aromaticum (strain DSM 19018 / LMG 30748 / EbN1) (Azoarcus sp. (strain EbN1))).